The chain runs to 269 residues: Energy-coupling factor transporter ATP-binding protein EcfA1 (269 aa).

The 235-residue stretch at 8–242 (ITFNHVRFKY…GDGLTEIGLD (235 aa)) folds into the ABC transporter domain. 42 to 49 (GHNGSGKS) is an ATP binding site.

This sequence belongs to the ABC transporter superfamily. Energy-coupling factor EcfA family. As to quaternary structure, forms a stable energy-coupling factor (ECF) transporter complex composed of 2 membrane-embedded substrate-binding proteins (S component), 2 ATP-binding proteins (A component) and 2 transmembrane proteins (T component).

It localises to the cell membrane. Its function is as follows. ATP-binding (A) component of a common energy-coupling factor (ECF) ABC-transporter complex. Unlike classic ABC transporters this ECF transporter provides the energy necessary to transport a number of different substrates. The polypeptide is Energy-coupling factor transporter ATP-binding protein EcfA1 (Staphylococcus saprophyticus subsp. saprophyticus (strain ATCC 15305 / DSM 20229 / NCIMB 8711 / NCTC 7292 / S-41)).